The following is a 149-amino-acid chain: Pleckstrin homology domain-containing family J member 1 (149 aa).

The 94-residue stretch at 15 to 108 (RAEKAAELSM…WVEALTNASY (94 aa)) folds into the PH domain.

The chain is Pleckstrin homology domain-containing family J member 1 (plekhj1) from Xenopus tropicalis (Western clawed frog).